A 937-amino-acid polypeptide reads, in one-letter code: DNA mismatch repair protein msh-2 (937 aa).

ATP is bound at residue 659-666 (GPNMGGKS).

It belongs to the DNA mismatch repair MutS family. In terms of assembly, heterodimer of msh2 and msh6.

The protein localises to the nucleus. In terms of biological role, involved in post-replicative DNA-mismatch repair. Binds to mismatch-containing DNA. This Neurospora crassa (strain ATCC 24698 / 74-OR23-1A / CBS 708.71 / DSM 1257 / FGSC 987) protein is DNA mismatch repair protein msh-2 (msh-2).